The chain runs to 219 residues: 3-dehydroquinate dehydratase (219 aa).

Residues 28–30 and Arg-61 contribute to the 3-dehydroquinate site; that span reads ELR. The active-site Proton donor/acceptor is the His-116. Lys-142 acts as the Schiff-base intermediate with substrate in catalysis. Residues Arg-180 and Gln-203 each coordinate 3-dehydroquinate.

Belongs to the type-I 3-dehydroquinase family. As to quaternary structure, homodimer.

The enzyme catalyses 3-dehydroquinate = 3-dehydroshikimate + H2O. It functions in the pathway metabolic intermediate biosynthesis; chorismate biosynthesis; chorismate from D-erythrose 4-phosphate and phosphoenolpyruvate: step 3/7. In terms of biological role, involved in the third step of the chorismate pathway, which leads to the biosynthesis of aromatic amino acids. Catalyzes the cis-dehydration of 3-dehydroquinate (DHQ) and introduces the first double bond of the aromatic ring to yield 3-dehydroshikimate. This chain is 3-dehydroquinate dehydratase, found in Aquifex aeolicus (strain VF5).